The chain runs to 509 residues: Anaerobic nitric oxide reductase flavorubredoxin (509 aa).

The interval 30–210 (LQGSSYNSYL…PFSRLVTAKI (181 aa)) is zinc metallo-hydrolase. Residues H79, E81, D83, H147, D166, and H227 each coordinate Fe cation. A Flavodoxin-like domain is found at 254-393 (ITLFYDTMSN…VCREHGREIA (140 aa)). Residues 260–264 (TMSNN) and 342–369 (AFGS…ETTL) each bind FMN. A Rubredoxin-like domain is found at 457–508 (SGCMQCSVCQWIYDPALGEPMQDVTPGTMWSDVPDSFLCPECGLGKDVFNPI). Fe cation is bound by residues C462, C465, C495, and C498.

It in the N-terminal section; belongs to the zinc metallo-hydrolase group 3 family. Homotetramer. Fe cation is required as a cofactor. Requires FMN as cofactor.

Its subcellular location is the cytoplasm. The protein operates within nitrogen metabolism; nitric oxide reduction. Anaerobic nitric oxide reductase; uses NADH to detoxify nitric oxide (NO), protecting several 4Fe-4S NO-sensitive enzymes. Has at least 2 reductase partners, only one of which (NorW, flavorubredoxin reductase) has been identified. NO probably binds to the di-iron center; electrons enter from the NorW at rubredoxin and are transferred sequentially to the FMN center and the di-iron center. Also able to function as an aerobic oxygen reductase. This Pectobacterium atrosepticum (strain SCRI 1043 / ATCC BAA-672) (Erwinia carotovora subsp. atroseptica) protein is Anaerobic nitric oxide reductase flavorubredoxin.